The following is a 328-amino-acid chain: RNA binding protein fox-1 homolog 3 (328 aa).

The segment covering 1–30 (MAQPYPPAQYPPPPQNGIPAEYAPPPPHPT) has biased composition (pro residues). The disordered stretch occupies residues 1 to 106 (MAQPYPPAQY…QPKRLHVSNI (106 aa)). Polar residues predominate over residues 49–87 (TPAQTHPEQPSSDTSTQPITGAQTVPQTDEAAQTDSQPL). The RRM domain occupies 99-172 (KRLHVSNIPF…NPVVGAVYGP (74 aa)). Residue R192 is modified to Asymmetric dimethylarginine; alternate. Residue R192 is modified to Omega-N-methylarginine; alternate. Residue R288 is modified to Asymmetric dimethylarginine.

Its subcellular location is the nucleus. The protein localises to the cytoplasm. Its function is as follows. Pre-mRNA alternative splicing regulator. Regulates alternative splicing of RBFOX2 to enhance the production of mRNA species that are targeted for nonsense-mediated decay (NMD). The sequence is that of RNA binding protein fox-1 homolog 3 (RBFOX3) from Bos taurus (Bovine).